Here is a 145-residue protein sequence, read N- to C-terminus: Large ribosomal subunit protein uL15 (145 aa).

Residues 1 to 18 (MKLHELKYTEGSKKDVTR) are compositionally biased toward basic and acidic residues. The disordered stretch occupies residues 1–51 (MKLHELKYTEGSKKDVTRVGRGMASGKGKTSTRGHKGQNSRSGGGVRVGFE). The segment covering 42-51 (SGGGVRVGFE) has biased composition (gly residues).

This sequence belongs to the universal ribosomal protein uL15 family. As to quaternary structure, part of the 50S ribosomal subunit.

Functionally, binds to the 23S rRNA. The sequence is that of Large ribosomal subunit protein uL15 from Mesoplasma florum (strain ATCC 33453 / NBRC 100688 / NCTC 11704 / L1) (Acholeplasma florum).